Reading from the N-terminus, the 81-residue chain is MRRSYVLLAFAIVLIISIISAQVEADASSDAFADAVADAVADPIKGKKIMKNMGKAMKIAGKVAKAMAPIVVPLIVSAAGK.

The N-terminal stretch at 1 to 21 is a signal peptide; it reads MRRSYVLLAFAIVLIISIISA. The propeptide occupies 22–43; it reads QVEADASSDAFADAVADAVADP. Ala-79 bears the Alanine amide mark.

This sequence belongs to the formicidae venom precursor-01 superfamily. In terms of processing, truncated sequences of this peptide have also been found in the venom. It is possible they have been cleaved in the venom. Expressed by the venom gland.

It is found in the secreted. Cationic amphipathic alpha-helical peptide with antimicrobial activities against E.coli (MIC=3.1), and S.aureus (MIC=3.1 uM). Also shows histamine-releasing activity (33.6% at 10 uM). Does not have activity against S.cerevisiae. Does not show hemolytic activity, even at 50 uM. This chain is U-poneritoxin(01)-Om6a, found in Odontomachus monticola (Trap-jaw ant).